A 541-amino-acid polypeptide reads, in one-letter code: Interleukin-18 receptor 1 (541 aa).

An N-terminal signal peptide occupies residues 1-18; the sequence is MNCRELPLTLWVLISVST. 2 disulfide bridges follow: cysteine 22–cysteine 41 and cysteine 43–cysteine 81. Residues 22-329 are Extracellular-facing; that stretch reads CTSRPHITVV…ADIPGHVFTR (308 aa). Ig-like C2-type domains are found at residues 33–121, 133–212, and 220–312; these read GEPF…SCFT, KKFF…DRSN, and PKLN…KSFI. 8 N-linked (GlcNAc...) asparagine glycosylation sites follow: asparagine 91, asparagine 102, asparagine 150, asparagine 197, asparagine 203, asparagine 236, asparagine 255, and asparagine 297. Intrachain disulfides connect cysteine 119–cysteine 158 and cysteine 140–cysteine 185. A disulfide bridge connects residues cysteine 237 and cysteine 298. A helical transmembrane segment spans residues 330 to 350; the sequence is GMIIAVLILVAVVCLVTVCVI. Residues 351–541 lie on the Cytoplasmic side of the membrane; that stretch reads YRVDLVLFYR…PEVLPVLSES (191 aa). The TIR domain occupies 373–520; it reads KTYDAFVSYL…RFWKNLLYLM (148 aa). The active site involves glutamate 455.

It belongs to the interleukin-1 receptor family. Forms a ternary complex with IL18 and IL18RAP. Within this complex, IL18R1 is involved in ligand-binding and IL18RAP in signaling leading to NF-kappa-B and JNK activation. Interacts with SLC12A3 in peritoneal macrophages; this interaction is increased by IL18 treatment. N-glycosylated. N-linked glycosyl chains contribute to ligand recognition and intra-receptor interactions required for formation of an active ternary receptor complex. As to expression, highly expressed in leukocytes, spleen, lung. Also expressed, but at lower levels, in liver, small intestine, colon, prostate, thymus, placenta, and heart. Specifically coexpressed with IL18R1 in Th1 cells.

Its subcellular location is the membrane. It carries out the reaction NAD(+) + H2O = ADP-D-ribose + nicotinamide + H(+). Functionally, within the IL18 receptor complex, responsible for the binding of the pro-inflammatory cytokine IL18, but not IL1A nor IL1B. Involved in IL18-mediated IFNG synthesis from T-helper 1 (Th1) cells. Contributes to IL18-induced cytokine production, either independently of SLC12A3, or as a complex with SLC12A3. The chain is Interleukin-18 receptor 1 from Homo sapiens (Human).